A 363-amino-acid chain; its full sequence is Exopolygalacturonase rpg13 (363 aa).

Residues methionine 1–alanine 26 form the signal peptide. N-linked (GlcNAc...) asparagine glycosylation is found at asparagine 121, asparagine 142, and asparagine 150. PbH1 repeat units follow at residues alanine 143–arginine 173, serine 174–glutamate 195, valine 197–serine 217, valine 227–threonine 248, and valine 256–threonine 277. Residue aspartate 188 is the Proton donor of the active site. A disulfide bridge connects residues cysteine 190 and cysteine 207. A glycan (N-linked (GlcNAc...) asparagine) is linked at asparagine 199. The active site involves histidine 211. N-linked (GlcNAc...) asparagine glycosylation is present at asparagine 321. A disulfide bridge links cysteine 322 with cysteine 328. A PbH1 6 repeat occupies cysteine 328 to glycine 354.

Belongs to the glycosyl hydrolase 28 family. N-glycosylated.

It localises to the secreted. The enzyme catalyses [(1-&gt;4)-alpha-D-galacturonosyl](n) + H2O = alpha-D-galacturonate + [(1-&gt;4)-alpha-D-galacturonosyl](n-1). Specific in hydrolyzing the terminal glycosidic bond of polygalacturonic acid and oligogalacturonates. Has no activity towards trigalacturonic acid. This chain is Exopolygalacturonase rpg13, found in Rhizopus delemar (strain RA 99-880 / ATCC MYA-4621 / FGSC 9543 / NRRL 43880) (Mucormycosis agent).